Consider the following 264-residue polypeptide: Pyridoxine 5'-phosphate synthase (264 aa).

Residues 1–21 show a composition bias toward polar residues; the sequence is MTDTAQILPTTLEQNPQNTSK. The segment at 1–22 is disordered; it reads MTDTAQILPTTLEQNPQNTSKK. N28 is a binding site for 3-amino-2-oxopropyl phosphate. Residue 30–31 coordinates 1-deoxy-D-xylulose 5-phosphate; that stretch reads DH. Position 39 (R39) interacts with 3-amino-2-oxopropyl phosphate. H64 serves as the catalytic Proton acceptor. Positions 66 and 71 each coordinate 1-deoxy-D-xylulose 5-phosphate. E91 serves as the catalytic Proton acceptor. Position 121 (T121) interacts with 1-deoxy-D-xylulose 5-phosphate. H217 functions as the Proton donor in the catalytic mechanism. 3-amino-2-oxopropyl phosphate-binding positions include G218 and 239-240; that span reads GH.

This sequence belongs to the PNP synthase family. As to quaternary structure, homooctamer; tetramer of dimers.

It localises to the cytoplasm. It catalyses the reaction 3-amino-2-oxopropyl phosphate + 1-deoxy-D-xylulose 5-phosphate = pyridoxine 5'-phosphate + phosphate + 2 H2O + H(+). It functions in the pathway cofactor biosynthesis; pyridoxine 5'-phosphate biosynthesis; pyridoxine 5'-phosphate from D-erythrose 4-phosphate: step 5/5. In terms of biological role, catalyzes the complicated ring closure reaction between the two acyclic compounds 1-deoxy-D-xylulose-5-phosphate (DXP) and 3-amino-2-oxopropyl phosphate (1-amino-acetone-3-phosphate or AAP) to form pyridoxine 5'-phosphate (PNP) and inorganic phosphate. The protein is Pyridoxine 5'-phosphate synthase of Psychrobacter cryohalolentis (strain ATCC BAA-1226 / DSM 17306 / VKM B-2378 / K5).